The following is a 372-amino-acid chain: Glutamate 5-kinase (372 aa).

Residue Lys14 coordinates ATP. Ser54, Asp141, and Asn153 together coordinate substrate. 173–174 (TD) lines the ATP pocket. The PUA domain occupies 280 to 358 (AGAVVLDNGA…ADIAAILGFV (79 aa)).

Belongs to the glutamate 5-kinase family.

The protein resides in the cytoplasm. It carries out the reaction L-glutamate + ATP = L-glutamyl 5-phosphate + ADP. The protein operates within amino-acid biosynthesis; L-proline biosynthesis; L-glutamate 5-semialdehyde from L-glutamate: step 1/2. In terms of biological role, catalyzes the transfer of a phosphate group to glutamate to form L-glutamate 5-phosphate. This Janthinobacterium sp. (strain Marseille) (Minibacterium massiliensis) protein is Glutamate 5-kinase.